The primary structure comprises 640 residues: Kelch-like protein 17 (640 aa).

A disordered region spans residues 1–50; it reads MQPRGERPAGRTQSPEHSSPGPGPEAPPPPQPPAPEAERARPRQARPAAP. Over residues 21–35 the composition is skewed to pro residues; that stretch reads GPGPEAPPPPQPPAP. A BTB domain is found at 90–157; that stretch reads CDIVLHVAAK…AYTAEIVVGE (68 aa). One can recognise a BACK domain in the interval 192–294; the sequence is CLGIRGFADT…SRDFLLGHVD (103 aa). The interval 287–639 is interaction with F-actin; the sequence is DFLLGHVDAE…SPTLSVSSTS (353 aa). Kelch repeat units follow at residues 341–387, 388–434, 436–481, 482–528, 530–575, and 576–622; these read VLFA…AVGN, RLYA…ALHG, LYAA…TLDG, NLYA…VLEG, LYVA…AMDG, and WLYA…VLEL. The tract at residues 638 to 640 is interaction with PDZK1; that stretch reads TSL.

In terms of assembly, interacts with F-actin; the interaction disrupts the F-actin structures and leads to marked changes of neuronal morphology. Component of a complex, composed of PDZK1, SYNGAP1, KLHL17 and NMDA receptors. Interacts directly with PDZK1 (via PDZ1 domain); the interaction is important for integrity of actin cytoskeleton structures in neurons. Interacts with DLG4 and SYNGAP1. Interacts (via kelch repeats) with GRIK2 (via C-terminus); the interaction targets GRIK2 for degradation via ubiquitin-proteasome pathway. Interacts with GRIK1. Interacts with (via BTB domain) CUL3; the interaction regulates surface GRIK2 expression.

It is found in the postsynaptic density. Its subcellular location is the synapse. Its pathway is protein modification; protein ubiquitination. In terms of biological role, substrate-recognition component of some cullin-RING-based BCR (BTB-CUL3-RBX1) E3 ubiquitin-protein ligase complexes. The BCR(KLHL17) complex mediates the ubiquitination and subsequent degradation of GLUR6. May play a role in the actin-based neuronal function. The chain is Kelch-like protein 17 (Klhl17) from Mus musculus (Mouse).